Consider the following 168-residue polypeptide: Protein SprT (168 aa).

The SprT-like domain maps to 20-166 (EKLQQANKYL…RHCQAILQLI (147 aa)). H78 is a binding site for Zn(2+). E79 is an active-site residue. H82 contributes to the Zn(2+) binding site.

The protein belongs to the SprT family. Zn(2+) is required as a cofactor.

It is found in the cytoplasm. This Proteus mirabilis (strain HI4320) protein is Protein SprT.